A 549-amino-acid chain; its full sequence is Membrane protein insertase YidC (549 aa).

A helical transmembrane segment spans residues 6–26; the sequence is NLLLIGLLLVSFMLWQSWMVD. The segment at 35–55 is disordered; sequence ATAESSVPASSGGDVPNQNDA. Transmembrane regions (helical) follow at residues 349 to 369, 424 to 444, 462 to 482, and 503 to 523; these read QFLH…TMIV, LGGC…YWTL, LSVK…MWYI, and PIVF…YWVV.

The protein belongs to the OXA1/ALB3/YidC family. Type 1 subfamily. Interacts with the Sec translocase complex via SecD. Specifically interacts with transmembrane segments of nascent integral membrane proteins during membrane integration.

It localises to the cell inner membrane. Functionally, required for the insertion and/or proper folding and/or complex formation of integral membrane proteins into the membrane. Involved in integration of membrane proteins that insert both dependently and independently of the Sec translocase complex, as well as at least some lipoproteins. Aids folding of multispanning membrane proteins. The chain is Membrane protein insertase YidC from Tolumonas auensis (strain DSM 9187 / NBRC 110442 / TA 4).